We begin with the raw amino-acid sequence, 446 residues long: Sterile alpha motif domain-containing protein 7 (446 aa).

The required for localization to nuclear polycomb bodies stretch occupies residues 94–168 (HTARTEMEMY…NLQGNPMLAA (75 aa)). 2 disordered regions span residues 187–207 (NTGN…QAEE) and 225–277 (KDPD…AWDD). The span at 232-249 (PSNQKSSETNEKPTTALA) shows a compositional bias: polar residues. In terms of domain architecture, SAM spans 327-392 (WTVDDVHSFI…SQVSQHVGSM (66 aa)).

Monomer, homodimer and homooligomer. Component of a Polycomb group (PcG) multiprotein PRC1-like complex. Interacts with PHC2, NR2E3 and SAMD11. Interacts with RNF1 in a PHC2-dependent manner. As to expression, expressed in the retina (at protein level). Expressed in the retinal inner and outer nuclear layers.

Its subcellular location is the nucleus. It localises to the cytoplasm. Its function is as follows. Component of a Polycomb group (PcG) multiprotein PRC1-like complex, essential for establishing rod photoreceptor cell identity and function by silencing nonrod gene expression in developing rod photoreceptor cells. Via its association with the PRC1-like complex, promotes epigenetic repressive marks H3K27me3 and H2AK119ub marks in nonrod genes, silencing their transcription. Represses Crx-controlled photoreceptor-specific gene expression. This chain is Sterile alpha motif domain-containing protein 7 (SAMD7), found in Homo sapiens (Human).